The primary structure comprises 471 residues: Chromosomal replication initiator protein DnaA (471 aa).

A domain I, interacts with DnaA modulators region spans residues 1-91 (MVDVSETTER…KYWQDESDAV (91 aa)). The domain II stretch occupies residues 91 to 133 (VYSVDICVSDGVGVQPQMAEHPDGAVDGPPVVMVGGTYDHLSS). Residues 134–352 (PLDPRFTFDN…GALNKVVAHS (219 aa)) are domain III, AAA+ region. Positions 180, 182, 183, and 184 each coordinate ATP. Residues 353–471 (SLVGRSVTIE…DINLLIRMLR (119 aa)) form a domain IV, binds dsDNA region.

Belongs to the DnaA family. Oligomerizes as a right-handed, spiral filament on DNA at oriC.

The protein localises to the cytoplasm. Functionally, plays an essential role in the initiation and regulation of chromosomal replication. ATP-DnaA binds to the origin of replication (oriC) to initiate formation of the DNA replication initiation complex once per cell cycle. Binds the DnaA box (a 9 base pair repeat at the origin) and separates the double-stranded (ds)DNA. Forms a right-handed helical filament on oriC DNA; dsDNA binds to the exterior of the filament while single-stranded (ss)DNA is stabiized in the filament's interior. The ATP-DnaA-oriC complex binds and stabilizes one strand of the AT-rich DNA unwinding element (DUE), permitting loading of DNA polymerase. After initiation quickly degrades to an ADP-DnaA complex that is not apt for DNA replication. Binds acidic phospholipids. This chain is Chromosomal replication initiator protein DnaA, found in Anaplasma marginale (strain St. Maries).